The primary structure comprises 165 residues: Methylated-DNA--protein-cysteine methyltransferase (165 aa).

Cysteine 126 serves as the catalytic Nucleophile; methyl group acceptor.

The protein belongs to the MGMT family.

The protein localises to the cytoplasm. The catalysed reaction is a 6-O-methyl-2'-deoxyguanosine in DNA + L-cysteinyl-[protein] = S-methyl-L-cysteinyl-[protein] + a 2'-deoxyguanosine in DNA. It catalyses the reaction a 4-O-methyl-thymidine in DNA + L-cysteinyl-[protein] = a thymidine in DNA + S-methyl-L-cysteinyl-[protein]. In terms of biological role, involved in the cellular defense against the biological effects of O6-methylguanine (O6-MeG) and O4-methylthymine (O4-MeT) in DNA. Repairs the methylated nucleobase in DNA by stoichiometrically transferring the methyl group to a cysteine residue in the enzyme. This is a suicide reaction: the enzyme is irreversibly inactivated. The polypeptide is Methylated-DNA--protein-cysteine methyltransferase (Mycobacterium bovis (strain ATCC BAA-935 / AF2122/97)).